The chain runs to 526 residues: Carotenoid cleavage oxygenase 1 (526 aa).

The tract at residues 1-33 (MAEYVFSDAPKDSHGNGVKDAVPGKQPEELPPA) is disordered. The piceatannol site is built by Tyr-133 and Lys-164. 2 residues coordinate trans-resveratrol: Tyr-133 and Lys-164. Fe cation contacts are provided by His-197, His-248, and His-313. Glu-383 contacts piceatannol. Glu-383 contacts trans-resveratrol. His-510 contacts Fe cation.

Belongs to the carotenoid oxygenase family. The cofactor is Fe(2+).

The enzyme catalyses trans-resveratrol + O2 = 3,5-dihydroxybenzaldehyde + 4-hydroxybenzaldehyde. It carries out the reaction piceatannol + O2 = 3,5-dihydroxybenzaldehyde + 3,4-dihydroxybenzaldehyde. Functionally, dioxygenase that cleaves the interphenyl C-alpha-C-beta double bond of resveratrol to yield 3,5-dihydroxybenzaldehyde and 4-hydroxybenzaldehyde. Also cleaves piceatannol, a compound that differs from resveratrol only in the occurrence of an additional hydroxyl group, which leads to the production of 3,4-dihydroxybenzaldehyde and 3,5-hydroxybenzaldehyde. Is not able to cleave trans-stilbene, 4-monohydroxy-trans-stilbene, 3,5-dihydroxy-trans-stilbene (pinosylvin), trismethoxy-resveratrol, and 3,3',5-trihydroxy-4'-methoxystilbene-3-O-beta-D-glucoside. Is not involved in carotenoid metabolism. The sequence is that of Carotenoid cleavage oxygenase 1 from Neurospora crassa (strain ATCC 24698 / 74-OR23-1A / CBS 708.71 / DSM 1257 / FGSC 987).